The following is a 186-amino-acid chain: DNA damage up-regulated protein (186 aa).

The disordered stretch occupies residues 147–166; it reads ATENGEGCRPARDPASSPSS.

Interacts with DNA damage response proteins ATR, H2AX, PCNA, RAD18 and RAD51C. Forms a complex with H2AX and RAD18 following DDUP phosphorylation. Post-translationally, phosphorylated in an ATR-dependent manner; phosphorylation is required for interaction with H2AX and RAD18 and for DDUP-mediated DNA damage repair.

The protein resides in the nucleus. Its subcellular location is the chromosome. Promotes DNA damage repair through both homologous recombination repair (HRR) and post-replication repair (PRR) mechanisms. Enhances the retention of DNA damage response protein RAD18 at sites of DNA damage. This allows for HRR via association of RAD18 with RAD51C and for PRR via RAD18-mediated promotion of PCNA monoubiquitination. The chain is DNA damage up-regulated protein from Homo sapiens (Human).